The sequence spans 471 residues: Glutamate--tRNA ligase (471 aa).

Positions 9–19 (PSPTGYLHVGG) match the 'HIGH' region motif. The 'KMSKS' region motif lies at 237–241 (KLSKR). K240 provides a ligand contact to ATP.

The protein belongs to the class-I aminoacyl-tRNA synthetase family. Glutamate--tRNA ligase type 1 subfamily. Monomer.

Its subcellular location is the cytoplasm. It carries out the reaction tRNA(Glu) + L-glutamate + ATP = L-glutamyl-tRNA(Glu) + AMP + diphosphate. In terms of biological role, catalyzes the attachment of glutamate to tRNA(Glu) in a two-step reaction: glutamate is first activated by ATP to form Glu-AMP and then transferred to the acceptor end of tRNA(Glu). The polypeptide is Glutamate--tRNA ligase (Pectobacterium atrosepticum (strain SCRI 1043 / ATCC BAA-672) (Erwinia carotovora subsp. atroseptica)).